Consider the following 683-residue polypeptide: DNA-directed RNA polymerase subunit beta' (683 aa).

4 residues coordinate Zn(2+): Cys-69, Cys-71, Cys-87, and Cys-90. Mg(2+) is bound by residues Asp-489, Asp-491, and Asp-493.

It belongs to the RNA polymerase beta' chain family. RpoC1 subfamily. As to quaternary structure, in plastids the minimal PEP RNA polymerase catalytic core is composed of four subunits: alpha, beta, beta', and beta''. When a (nuclear-encoded) sigma factor is associated with the core the holoenzyme is formed, which can initiate transcription. The cofactor is Mg(2+). Zn(2+) is required as a cofactor.

The protein localises to the plastid. It is found in the chloroplast. It catalyses the reaction RNA(n) + a ribonucleoside 5'-triphosphate = RNA(n+1) + diphosphate. Functionally, DNA-dependent RNA polymerase catalyzes the transcription of DNA into RNA using the four ribonucleoside triphosphates as substrates. This chain is DNA-directed RNA polymerase subunit beta', found in Zea mays (Maize).